The primary structure comprises 348 residues: Mediator of RNA polymerase II transcription subunit 18 (348 aa).

A compositionally biased stretch (basic and acidic residues) spans 152–218; it reads MDVDLEHKDK…KNDEVKHSEV (67 aa). The segment at 152–227 is disordered; the sequence is MDVDLEHKDK…VNLEDGAETG (76 aa). Residues 167–223 adopt a coiled-coil conformation; it reads DTKEKEEDKKEEDKKEEDKKEEDKKEEDKKEEDKKEEEKVEKKNDEVKHSEVNLEDG.

It belongs to the Mediator complex subunit 18 family. As to quaternary structure, component of the Mediator complex.

It localises to the nucleus. In terms of biological role, component of the Mediator complex, a coactivator involved in the regulated transcription of nearly all RNA polymerase II-dependent genes. Mediator functions as a bridge to convey information from gene-specific regulatory proteins to the basal RNA polymerase II transcription machinery. Mediator is recruited to promoters by direct interactions with regulatory proteins and serves as a scaffold for the assembly of a functional preinitiation complex with RNA polymerase II and the general transcription factors. The sequence is that of Mediator of RNA polymerase II transcription subunit 18 (SRB5) from Scheffersomyces stipitis (strain ATCC 58785 / CBS 6054 / NBRC 10063 / NRRL Y-11545) (Yeast).